The chain runs to 680 residues: HEAT repeat-containing protein 3 (680 aa).

A compositionally biased stretch (basic residues) spans 1–11 (MGKSRTKRFKR). Residues 1–39 (MGKSRTKRFKRPQFSPTGDCQAEAAAAANGTGGEEDDGP) form a disordered region. Phosphoserine is present on Ser-15. A compositionally biased stretch (low complexity) spans 18 to 29 (GDCQAEAAAAAN). 2 HEAT repeats span residues 38-69 (GPAA…VQQR) and 74-110 (GLAR…SACG). Ser-144 carries the phosphoserine modification. At Thr-340 the chain carries Phosphothreonine.

This sequence belongs to the nuclear import and ribosome assembly adapter family. In terms of assembly, component of a hexameric 5S RNP precursor complex, composed of 5S RNA, RRS1, RPF2/BXDC1, RPL5, RPL11 and HEATR3; this complex acts as a precursor for ribosome assembly.

In terms of biological role, plays a role in ribosome biogenesis and in nuclear import of the 60S ribosomal protein L5/large ribosomal subunit protein uL18 (RPL5). Required for proper erythrocyte maturation. In Homo sapiens (Human), this protein is HEAT repeat-containing protein 3 (HEATR3).